The following is a 1068-amino-acid chain: Sucrose-phosphate synthase (1068 aa).

Disordered regions lie at residues 18–47 and 118–139; these read HTSS…GAHM and KEQE…SEGE. Residues 23 to 32 are compositionally biased toward gly residues; it reads GAGGGGGGGD. A compositionally biased stretch (basic and acidic residues) spans 118–128; it reads KEQEQVRREAT.

It belongs to the glycosyltransferase 1 family. As to quaternary structure, homodimer or homotetramer.

It carries out the reaction beta-D-fructose 6-phosphate + UDP-alpha-D-glucose = sucrose 6(F)-phosphate + UDP + H(+). It functions in the pathway glycan biosynthesis; sucrose biosynthesis; sucrose from D-fructose 6-phosphate and UDP-alpha-D-glucose: step 1/2. Its activity is regulated as follows. Activity is regulated by phosphorylation and moderated by concentration of metabolites and light. Plays a role in photosynthetic sucrose synthesis by catalyzing the rate-limiting step of sucrose biosynthesis from UDP-glucose and fructose- 6-phosphate. Involved in the regulation of carbon partitioning in the leaves of plants. May regulate the synthesis of sucrose and therefore play a major role as a limiting factor in the export of photoassimilates out of the leaf. Plays a role for sucrose availability that is essential for plant growth and fiber elongation. The chain is Sucrose-phosphate synthase from Zea mays (Maize).